Here is a 36-residue protein sequence, read N- to C-terminus: Beta-amanitin proprotein (36 aa).

The propeptide occupies 1-10; the sequence is MSDINATRLP. Residues 11-18 constitute a cross-link (cyclopeptide (Ile-Pro)); that stretch reads IWGIGCDP. Residues 12 to 16 constitute a cross-link (2'-cysteinyl-6'-hydroxytryptophan sulfoxide (Trp-Cys)); the sequence is WGIGC. The propeptide occupies 19 to 36; the sequence is CIGDDVTALLTRGEASLC.

It belongs to the MSDIN fungal toxin family. Processed by the macrocyclase-peptidase enzyme POPB to yield a toxic cyclic decapeptide. POPB first removes 10 residues from the N-terminus. Conformational trapping of the remaining peptide forces the enzyme to release this intermediate rather than proceed to macrocyclization. The enzyme rebinds the remaining peptide in a different conformation and catalyzes macrocyclization of the N-terminal 8 residues.

Functionally, toxin belonging to the bicyclic octapeptides amatoxins that acts by binding non-competitively to RNA polymerase II and greatly slowing the elongation of transcripts from target promoters. This chain is Beta-amanitin proprotein, found in Amanita phalloides (Death cap).